The following is a 244-amino-acid chain: Inactive chemokine-binding protein (244 aa).

Residues 1 to 79 (MHVPASLQQS…STSVEDVDPP (79 aa)) form a disordered region. Residues 37–53 (QDQTPTNDKICQSVTEI) show a composition bias toward polar residues. Residues 54-77 (TESESDPDPEVESEDDSTSVEDVD) are compositionally biased toward acidic residues.

It belongs to the orthopoxvirus OPG001 family.

It localises to the host cytoplasm. The protein is truncated in this vaccinal strain and presumably inactive, because the lack of signal peptide prevents the protein of being secreted. In the wild-type viruses inhibits host immune defense by binding to host chemokines. Binds host CC chemokines (beta chemokines) such as RANTES with high affinity, but not CXC or C chemokines (alpha and gamma chemokines). This is Inactive chemokine-binding protein (OPG001) from Vaccinia virus (strain Western Reserve) (VACV).